We begin with the raw amino-acid sequence, 508 residues long: GMP synthase [glutamine-hydrolyzing] (508 aa).

Residues 1 to 189 enclose the Glutamine amidotransferase type-1 domain; sequence MILVLDFGSQ…ALLVCGCEKT (189 aa). The active-site Nucleophile is the cysteine 78. Active-site residues include histidine 163 and glutamate 165. The region spanning 190–383 is the GMPS ATP-PPase domain; the sequence is WGMQHFAQRE…LGVSQDFLMR (194 aa). Position 217 to 223 (217 to 223) interacts with ATP; it reads SGGVDST.

In terms of assembly, homodimer.

It carries out the reaction XMP + L-glutamine + ATP + H2O = GMP + L-glutamate + AMP + diphosphate + 2 H(+). Its pathway is purine metabolism; GMP biosynthesis; GMP from XMP (L-Gln route): step 1/1. Catalyzes the synthesis of GMP from XMP. This chain is GMP synthase [glutamine-hydrolyzing], found in Helicobacter pylori (strain P12).